The sequence spans 225 residues: RNA-binding protein 24-A (225 aa).

Residues 11-88 (TKIFVGGLPY…RKANVNLAYL (78 aa)) form the RRM domain.

The protein localises to the nucleus. It localises to the cytoplasm. Multifunctional RNA-binding protein involved in the regulation of pre-mRNA splicing, mRNA stability and mRNA translation important for cell fate decision and differentiation. Plays a major role in pre-mRNA alternative splicing regulation. Mediates preferentially muscle-specific exon inclusion in numerous mRNAs important for striated cardiac and skeletal muscle cell differentiation. Binds to intronic splicing enhancer (ISE) composed of stretches of GU-rich motifs localized in flanking intron of exon that will be included by alternative splicing. Involved in embryonic stem cell (ESC) transition to cardiac cell differentiation by promoting pre-mRNA alternative splicing events of several pluripotency and/or differentiation genes. Plays a role in the regulation of mRNA stability and mRNA translation to which it is bound. Involved in myogenic differentiation by regulating myog levels. Binds to a huge amount of mRNAs. Required for embryonic heart development, sarcomer and M-band formation in striated muscles. The chain is RNA-binding protein 24-A (rbm24-a) from Xenopus laevis (African clawed frog).